A 130-amino-acid chain; its full sequence is Small ribosomal subunit protein uS11 (130 aa).

It belongs to the universal ribosomal protein uS11 family. In terms of assembly, part of the 30S ribosomal subunit. Interacts with proteins S7 and S18. Binds to IF-3.

Its function is as follows. Located on the platform of the 30S subunit, it bridges several disparate RNA helices of the 16S rRNA. Forms part of the Shine-Dalgarno cleft in the 70S ribosome. This Gloeothece citriformis (strain PCC 7424) (Cyanothece sp. (strain PCC 7424)) protein is Small ribosomal subunit protein uS11.